Here is a 217-residue protein sequence, read N- to C-terminus: Ras-related protein Rab-19 (217 aa).

GTP contacts are provided by S26, V28, G29, K30, T31, C32, Y42, T43, E44, T45, and T49. T31 contributes to the Mg(2+) binding site. A Switch 1 motif is present at residues 39–54 (SGVYTETQQNTIGVDF). Mg(2+) is bound by residues T49 and D72. The Switch 2 motif lies at 74–89 (AGQERFRTITQSYYRS). GTP is bound by residues G75, N130, K131, D133, S161, A162, and K163. S-geranylgeranyl cysteine attachment occurs at residues C215 and C217. Residue C217 is modified to Cysteine methyl ester.

The protein belongs to the small GTPase superfamily. Rab family. Mg(2+) is required as a cofactor.

It localises to the cell membrane. It catalyses the reaction GTP + H2O = GDP + phosphate + H(+). With respect to regulation, regulated by guanine nucleotide exchange factors (GEFs) which promote the exchange of bound GDP for free GTP. Regulated by GTPase activating proteins (GAPs) which increase the GTP hydrolysis activity. Inhibited by GDP dissociation inhibitors (GDIs). Functionally, the small GTPases Rab are key regulators of intracellular membrane trafficking, from the formation of transport vesicles to their fusion with membranes. Rabs cycle between an inactive GDP-bound form and an active GTP-bound form that is able to recruit to membranes different set of downstream effectors directly responsible for vesicle formation, movement, tethering and fusion. In Homo sapiens (Human), this protein is Ras-related protein Rab-19.